The primary structure comprises 374 residues: Lipid-A-disaccharide synthase (374 aa).

It belongs to the LpxB family.

The catalysed reaction is a lipid X + a UDP-2-N,3-O-bis[(3R)-3-hydroxyacyl]-alpha-D-glucosamine = a lipid A disaccharide + UDP + H(+). The protein operates within bacterial outer membrane biogenesis; LPS lipid A biosynthesis. Functionally, condensation of UDP-2,3-diacylglucosamine and 2,3-diacylglucosamine-1-phosphate to form lipid A disaccharide, a precursor of lipid A, a phosphorylated glycolipid that anchors the lipopolysaccharide to the outer membrane of the cell. This is Lipid-A-disaccharide synthase from Pseudomonas fluorescens (strain ATCC BAA-477 / NRRL B-23932 / Pf-5).